The sequence spans 446 residues: N-succinylarginine dihydrolase 2 (446 aa).

Residues 20–29, Asn-111, and 138–139 contribute to the substrate site; these read VGLSPGNLAS and HR. Residue Glu-175 is part of the active site. Arg-212 lines the substrate pocket. Residue His-246 is part of the active site. Positions 248 and 361 each coordinate substrate. Cys-367 functions as the Nucleophile in the catalytic mechanism.

Belongs to the succinylarginine dihydrolase family. In terms of assembly, homodimer.

The enzyme catalyses N(2)-succinyl-L-arginine + 2 H2O + 2 H(+) = N(2)-succinyl-L-ornithine + 2 NH4(+) + CO2. The protein operates within amino-acid degradation; L-arginine degradation via AST pathway; L-glutamate and succinate from L-arginine: step 2/5. Functionally, catalyzes the hydrolysis of N(2)-succinylarginine into N(2)-succinylornithine, ammonia and CO(2). This Caulobacter vibrioides (strain ATCC 19089 / CIP 103742 / CB 15) (Caulobacter crescentus) protein is N-succinylarginine dihydrolase 2.